The sequence spans 258 residues: Phosphoribosylformylglycinamidine synthase subunit PurQ (258 aa).

The Glutamine amidotransferase type-1 domain occupies 7–238; sequence IGILLMEGTN…QAMYLETEKD (232 aa). The active-site Nucleophile is Cys97. Active-site residues include His220 and Glu222.

Part of the FGAM synthase complex composed of 1 PurL, 1 PurQ and 2 PurS subunits.

It is found in the cytoplasm. The enzyme catalyses N(2)-formyl-N(1)-(5-phospho-beta-D-ribosyl)glycinamide + L-glutamine + ATP + H2O = 2-formamido-N(1)-(5-O-phospho-beta-D-ribosyl)acetamidine + L-glutamate + ADP + phosphate + H(+). The catalysed reaction is L-glutamine + H2O = L-glutamate + NH4(+). It functions in the pathway purine metabolism; IMP biosynthesis via de novo pathway; 5-amino-1-(5-phospho-D-ribosyl)imidazole from N(2)-formyl-N(1)-(5-phospho-D-ribosyl)glycinamide: step 1/2. Functionally, part of the phosphoribosylformylglycinamidine synthase complex involved in the purines biosynthetic pathway. Catalyzes the ATP-dependent conversion of formylglycinamide ribonucleotide (FGAR) and glutamine to yield formylglycinamidine ribonucleotide (FGAM) and glutamate. The FGAM synthase complex is composed of three subunits. PurQ produces an ammonia molecule by converting glutamine to glutamate. PurL transfers the ammonia molecule to FGAR to form FGAM in an ATP-dependent manner. PurS interacts with PurQ and PurL and is thought to assist in the transfer of the ammonia molecule from PurQ to PurL. The chain is Phosphoribosylformylglycinamidine synthase subunit PurQ from Thermoplasma volcanium (strain ATCC 51530 / DSM 4299 / JCM 9571 / NBRC 15438 / GSS1).